Reading from the N-terminus, the 95-residue chain is Acylphosphatase (95 aa).

An Acylphosphatase-like domain is found at 7-95; the sequence is CTMAWVYGSV…RSWDKFAILY (89 aa). Active-site residues include Arg-22 and Asn-40.

The protein belongs to the acylphosphatase family.

It carries out the reaction an acyl phosphate + H2O = a carboxylate + phosphate + H(+). The protein is Acylphosphatase (acyP) of Klebsiella pneumoniae subsp. pneumoniae (strain ATCC 700721 / MGH 78578).